An 89-amino-acid polypeptide reads, in one-letter code: Small ribosomal subunit protein uS15 (89 aa).

The disordered stretch occupies residues 1 to 24 (MSLDTTEKQQLINSHQTHATDTGS). The span at 8–24 (KQQLINSHQTHATDTGS) shows a compositional bias: polar residues.

It belongs to the universal ribosomal protein uS15 family. In terms of assembly, part of the 30S ribosomal subunit. Forms a bridge to the 50S subunit in the 70S ribosome, contacting the 23S rRNA.

One of the primary rRNA binding proteins, it binds directly to 16S rRNA where it helps nucleate assembly of the platform of the 30S subunit by binding and bridging several RNA helices of the 16S rRNA. In terms of biological role, forms an intersubunit bridge (bridge B4) with the 23S rRNA of the 50S subunit in the ribosome. This Synechococcus sp. (strain CC9311) protein is Small ribosomal subunit protein uS15.